A 385-amino-acid chain; its full sequence is Chaperone protein DnaJ 2 (385 aa).

The J domain occupies 10-75; the sequence is DYYKELGVSS…AKRKEYDETR (66 aa). The segment at 155–233 adopts a CR-type zinc-finger fold; that stretch reads GVTVPLRMTS…CHGSGIQNRT (79 aa). The Zn(2+) site is built by cysteine 168, cysteine 171, cysteine 185, cysteine 188, cysteine 207, cysteine 210, cysteine 221, and cysteine 224. CXXCXGXG motif repeat units lie at residues 168-175, 185-192, 207-214, and 221-228; these read CTTCHGSG, CPICNGTG, CDGCRGTG, and CVDCHGSG.

The protein belongs to the DnaJ family. As to quaternary structure, homodimer. Zn(2+) serves as cofactor.

It localises to the cytoplasm. Functionally, participates actively in the response to hyperosmotic and heat shock by preventing the aggregation of stress-denatured proteins and by disaggregating proteins, also in an autonomous, DnaK-independent fashion. Unfolded proteins bind initially to DnaJ; upon interaction with the DnaJ-bound protein, DnaK hydrolyzes its bound ATP, resulting in the formation of a stable complex. GrpE releases ADP from DnaK; ATP binding to DnaK triggers the release of the substrate protein, thus completing the reaction cycle. Several rounds of ATP-dependent interactions between DnaJ, DnaK and GrpE are required for fully efficient folding. Also involved, together with DnaK and GrpE, in the DNA replication of plasmids through activation of initiation proteins. In Nocardia farcinica (strain IFM 10152), this protein is Chaperone protein DnaJ 2.